Here is a 248-residue protein sequence, read N- to C-terminus: MIIVGDIGNTETKICLVNSKNIIIKRVILLTKKINHSSLNKSLLGLNLKNKSINKCLFCSVVPKKFNAVKIFFKKVYKIKCHELKKLNLNKLIKIKVNYKQIGSDRLANAISIINNKDNFIILDFGTATTFDVLIKNTYHGGVIAPGVKLSLDTLTDKASQIPKINLKKTNRVIGLNTISAVRAGFFWGYEGLIDNIVNLIKKETKMSFKIIITGGFSGLFKNSIKTKVTLNKDITIKGLIRATTLIK.

D6–K13 provides a ligand contact to ATP. G103–R106 is a substrate binding site. The active-site Proton acceptor is D105. D124 serves as a coordination point for K(+). T127 lines the ATP pocket. A substrate-binding site is contributed by T178.

This sequence belongs to the type III pantothenate kinase family. As to quaternary structure, homodimer. The cofactor is NH4(+). K(+) is required as a cofactor.

The protein localises to the cytoplasm. It carries out the reaction (R)-pantothenate + ATP = (R)-4'-phosphopantothenate + ADP + H(+). It functions in the pathway cofactor biosynthesis; coenzyme A biosynthesis; CoA from (R)-pantothenate: step 1/5. Catalyzes the phosphorylation of pantothenate (Pan), the first step in CoA biosynthesis. This Pelagibacter ubique (strain HTCC1062) protein is Type III pantothenate kinase.